A 139-amino-acid polypeptide reads, in one-letter code: Hydrogenase maturation factor HypA (139 aa).

H2 provides a ligand contact to Ni(2+). Zn(2+) is bound by residues C73, C76, C110, and C113.

Belongs to the HypA/HybF family.

In terms of biological role, involved in the maturation of [NiFe] hydrogenases. Required for nickel insertion into the metal center of the hydrogenase. In Pyrococcus horikoshii (strain ATCC 700860 / DSM 12428 / JCM 9974 / NBRC 100139 / OT-3), this protein is Hydrogenase maturation factor HypA.